The sequence spans 429 residues: Bifunctional phosphoribosylaminoimidazole carboxylase/phosphoribosylaminoimidazole succinocarboxamide synthetase (429 aa).

The SAICAR synthetase stretch occupies residues 7–264; sequence ASIEGYKLGK…WVAEQLADIV (258 aa). An SAICAR synthetase domain region spans residues 7-264; the sequence is ASIEGYKLGK…WVAEQLADIV (258 aa). Residues 265–429 are AIR carboxylase; the sequence is PKKDHLVVIL…DKELRGVRNA (165 aa). An AIR carboxylase domain region spans residues 270–429; that stretch reads LVVILMGSAS…DKELRGVRNA (160 aa). Serine 335 lines the CO2 pocket.

In the N-terminal section; belongs to the SAICAR synthetase family. The protein in the C-terminal section; belongs to the AIR carboxylase family. Class II subfamily. As to quaternary structure, homooctamer.

The enzyme catalyses 5-amino-1-(5-phospho-D-ribosyl)imidazole-4-carboxylate + L-aspartate + ATP = (2S)-2-[5-amino-1-(5-phospho-beta-D-ribosyl)imidazole-4-carboxamido]succinate + ADP + phosphate + 2 H(+). It catalyses the reaction 5-amino-1-(5-phospho-D-ribosyl)imidazole-4-carboxylate + H(+) = 5-amino-1-(5-phospho-beta-D-ribosyl)imidazole + CO2. It functions in the pathway purine metabolism; IMP biosynthesis via de novo pathway; 5-amino-1-(5-phospho-D-ribosyl)imidazole-4-carboxamide from 5-amino-1-(5-phospho-D-ribosyl)imidazole-4-carboxylate: step 1/2. Its pathway is purine metabolism; IMP biosynthesis via de novo pathway; 5-amino-1-(5-phospho-D-ribosyl)imidazole-4-carboxylate from 5-amino-1-(5-phospho-D-ribosyl)imidazole (carboxylase route): step 1/1. Bifunctional phosphoribosylaminoimidazole carboxylase and phosphoribosylaminoimidazole succinocarboxamide synthetase catalyzing two reactions of the de novo purine biosynthetic pathway. This is Bifunctional phosphoribosylaminoimidazole carboxylase/phosphoribosylaminoimidazole succinocarboxamide synthetase from Drosophila melanogaster (Fruit fly).